The chain runs to 485 residues: Pelle-like serine/threonine-protein kinase pik-1 (485 aa).

Residues 115 to 132 (TSRVSKQMVQPPGSQSAS) are compositionally biased toward polar residues. Residues 115–155 (TSRVSKQMVQPPGSQSASRLKKTEIKESSPSPAAAAASQLS) form a disordered region. The segment covering 142 to 152 (SSPSPAAAAAS) has biased composition (low complexity). One can recognise a Protein kinase domain in the interval 185-485 (FAVSNVIGKG…LCKNSIPPVV (301 aa)). ATP contacts are provided by residues 191–199 (IGKGGYGTV) and Lys214. Asp318 serves as the catalytic Proton acceptor.

It belongs to the protein kinase superfamily. TKL Ser/Thr protein kinase family. Pelle subfamily. In terms of assembly, interacts with actl-1. Expressed in the nervous system.

The enzyme catalyses L-seryl-[protein] + ATP = O-phospho-L-seryl-[protein] + ADP + H(+). It carries out the reaction L-threonyl-[protein] + ATP = O-phospho-L-threonyl-[protein] + ADP + H(+). Its function is as follows. Through association with the adapter actl-1, may act downstream of the receptor complex composed of ilcr-1 and ilcr-2, which is a signaling complex that modulates neuronal activity and animal behavior in response to sensory neuron input. This is Pelle-like serine/threonine-protein kinase pik-1 from Caenorhabditis elegans.